Consider the following 525-residue polypeptide: Chromosomal replication initiator protein DnaA (525 aa).

The domain I, interacts with DnaA modulators stretch occupies residues 1–71 (MNDFWQHCSA…SDLARDFWNA (71 aa)). The segment at 71-188 (APIEVQFVLD…GEADSMYERS (118 aa)) is domain II. Residues 160–182 (AAAGRRTWRPGPGAAPANGGEAD) form a disordered region. A compositionally biased stretch (low complexity) spans 169–181 (PGPGAAPANGGEA). The segment at 189–405 (KLNPVLTFDN…GALRKILAYS (217 aa)) is domain III, AAA+ region. ATP contacts are provided by G233, G235, K236, and T237. Residues 406–525 (KFHGREISIE…LHVLEQTLKG (120 aa)) are domain IV, binds dsDNA.

This sequence belongs to the DnaA family. Oligomerizes as a right-handed, spiral filament on DNA at oriC.

It localises to the cytoplasm. Functionally, plays an essential role in the initiation and regulation of chromosomal replication. ATP-DnaA binds to the origin of replication (oriC) to initiate formation of the DNA replication initiation complex once per cell cycle. Binds the DnaA box (a 9 base pair repeat at the origin) and separates the double-stranded (ds)DNA. Forms a right-handed helical filament on oriC DNA; dsDNA binds to the exterior of the filament while single-stranded (ss)DNA is stabiized in the filament's interior. The ATP-DnaA-oriC complex binds and stabilizes one strand of the AT-rich DNA unwinding element (DUE), permitting loading of DNA polymerase. After initiation quickly degrades to an ADP-DnaA complex that is not apt for DNA replication. Binds acidic phospholipids. The sequence is that of Chromosomal replication initiator protein DnaA from Burkholderia ambifaria (strain ATCC BAA-244 / DSM 16087 / CCUG 44356 / LMG 19182 / AMMD) (Burkholderia cepacia (strain AMMD)).